The primary structure comprises 284 residues: Tropomyosin (284 aa).

2 disordered regions span residues 1–27 (MDAI…QMEQ) and 99–131 (YERS…KVLE). Positions 1–273 (MDAIKKKMQA…KERYKAISDD (273 aa)) form a coiled coil. Basic and acidic residues predominate over residues 102-131 (SEEKLNSTTEKLEEASKAADESERNRKVLE).

Belongs to the tropomyosin family. As to quaternary structure, homodimer.

Functionally, tropomyosin, in association with the troponin complex, plays a central role in the calcium dependent regulation of muscle contraction. The protein is Tropomyosin of Mimachlamys nobilis (Noble scallop).